The primary structure comprises 410 residues: Pyruvate dehydrogenase complex protein X component, mitochondrial (410 aa).

The N-terminal 30 residues, 1-30 (MLSAISKVSTLKSCTRYLTKCNYHASAKLL), are a transit peptide targeting the mitochondrion. Residues 32–108 (VKTFSMPAMS…DVGEPIAYIA (77 aa)) enclose the Lipoyl-binding domain. Lys-73 carries the N6-lipoyllysine modification. Residues 169-210 (TLLPSVSLLLAENNISKQKALKEIAPSGSNGRLLKGDVLAYL) enclose the Peripheral subunit-binding (PSBD) domain.

This sequence belongs to the 2-oxoacid dehydrogenase family. Eukaryotic pyruvate dehydrogenase (PDH) complexes are organized as a core consisting of the oligomeric dihydrolipoamide acetyl-transferase (E2), around which are arranged multiple copies of pyruvate dehydrogenase (E1), dihydrolipoamide dehydrogenase (E3) and protein X (E3BP) bound by non-covalent bonds.

It is found in the mitochondrion matrix. Required for anchoring dihydrolipoamide dehydrogenase (E3) to the dihydrolipoamide transacetylase (E2) core of the pyruvate dehydrogenase complexes of eukaryotes. This specific binding is essential for a functional PDH complex. In Saccharomyces cerevisiae (strain ATCC 204508 / S288c) (Baker's yeast), this protein is Pyruvate dehydrogenase complex protein X component, mitochondrial (PDX1).